A 503-amino-acid chain; its full sequence is Probable cytosol aminopeptidase (503 aa).

Positions 270 and 275 each coordinate Mn(2+). Residue Lys282 is part of the active site. The Mn(2+) site is built by Asp293, Asp352, and Glu354. Arg356 is an active-site residue.

The protein belongs to the peptidase M17 family. Mn(2+) is required as a cofactor.

The protein localises to the cytoplasm. The enzyme catalyses Release of an N-terminal amino acid, Xaa-|-Yaa-, in which Xaa is preferably Leu, but may be other amino acids including Pro although not Arg or Lys, and Yaa may be Pro. Amino acid amides and methyl esters are also readily hydrolyzed, but rates on arylamides are exceedingly low.. The catalysed reaction is Release of an N-terminal amino acid, preferentially leucine, but not glutamic or aspartic acids.. Its function is as follows. Presumably involved in the processing and regular turnover of intracellular proteins. Catalyzes the removal of unsubstituted N-terminal amino acids from various peptides. The protein is Probable cytosol aminopeptidase of Enterobacter sp. (strain 638).